The following is a 280-amino-acid chain: Ribosomal RNA small subunit methyltransferase A (280 aa).

S-adenosyl-L-methionine contacts are provided by asparagine 11, leucine 13, glycine 37, glutamate 57, aspartate 85, and asparagine 106.

The protein belongs to the class I-like SAM-binding methyltransferase superfamily. rRNA adenine N(6)-methyltransferase family. RsmA subfamily.

It localises to the cytoplasm. The enzyme catalyses adenosine(1518)/adenosine(1519) in 16S rRNA + 4 S-adenosyl-L-methionine = N(6)-dimethyladenosine(1518)/N(6)-dimethyladenosine(1519) in 16S rRNA + 4 S-adenosyl-L-homocysteine + 4 H(+). Functionally, specifically dimethylates two adjacent adenosines (A1518 and A1519) in the loop of a conserved hairpin near the 3'-end of 16S rRNA in the 30S particle. May play a critical role in biogenesis of 30S subunits. The polypeptide is Ribosomal RNA small subunit methyltransferase A (Campylobacter concisus (strain 13826)).